Here is a 1058-residue protein sequence, read N- to C-terminus: MRRKGRCHRGSAARHPSSPCSVKHSPTRETLTYAQAQRMVEIEIEGRLHRISIFDPLEIILEDDLTAQEMSECNSNKENSERPPVCLRTKRHKNNRVKKKNEALPSAHGTPASASALPEPKVRIVEYSPPSAPRRPPVYYKFIEKSAEELDNEVEYDMDEEDYAWLEIVNEKRKGDCVPAVSQSMFEFLMDRFEKESHCENQKQGEQQSLIDEDAVCCICMDGECQNSNVILFCDMCNLAVHQECYGVPYIPEGQWLCRHCLQSRARPADCVLCPNKGGAFKKTDDDRWGHVVCALWIPEVGFANTVFIEPIDGVRNIPPARWKLTCYLCKQKGVGACIQCHKANCYTAFHVTCAQKAGLYMKMEPVKELTGGGTTFSVRKTAYCDVHTPPGCTRRPLNIYGDVEMKNGVCRKESSVKTVRSTSKVRKKAKKAKKALAEPCAVLPTVCAPYIPPQRLNRIANQVAIQRKKQFVERAHSYWLLKRLSRNGAPLLRRLQSSLQSQRSSQQRENDEEMKAAKEKLKYWQRLRHDLERARLLIELLRKREKLKREQVKVEQVAMELRLTPLTVLLRSVLDQLQDKDPARIFAQPVSLKEVPDYLDHIKHPMDFATMRKRLEAQGYKNLHEFEEDFDLIIDNCMKYNARDTVFYRAAVRLRDQGGVVLRQARREVDSIGLEEASGMHLPERPAAAPRRPFSWEDVDRLLDPANRAHLGLEEQLRELLDMLDLTCAMKSSGSRSKRAKLLKKEIALLRNKLSQQHSQPLPTGPGLEGFEEDGAALGPEAGEEVLPRLETLLQPRKRSRSTCGDSEVEEESPGKRLDAGLTNGFGGARSEQEPGGGLGRKATPRRRCASESSISSSNSPLCDSSFNAPKCGRGKPALVRRHTLEDRSELISCIENGNYAKAARIAAEVGQSSMWISTDAAASVLEPLKVVWAKCSGYPSYPALIIDPKMPRVPGHHNGVTIPAPPLDVLKIGEHMQTKSDEKLFLVLFFDNKRSWQWLPKSKMVPLGIDETIDKLKMMEGRNSSIRKAVRIAFDRAMNHLSRVHGEPTSDLSDID.

A compositionally biased stretch (basic residues) spans 1–12 (MRRKGRCHRGSA). The tract at residues 1 to 26 (MRRKGRCHRGSAARHPSSPCSVKHSP) is disordered. The segment at 31–80 (LTYAQAQRMVEIEIEGRLHRISIFDPLEIILEDDLTAQEMSECNSNKENS) is interaction with KAT7/HBO1 and histones. A disordered region spans residues 92 to 116 (HKNNRVKKKNEALPSAHGTPASASA). A Phosphoserine modification is found at S128. Residues 214–264 (DAVCCICMDGECQNSNVILFCDMCNLAVHQECYGVPYIPEGQWLCRHCLQS) form a PHD-type 1 zinc finger. The C2HC pre-PHD-type zinc-finger motif lies at 268–301 (PADCVLCPNKGGAFKKTDDDRWGHVVCALWIPEV). A PHD-type 2 zinc finger spans residues 325-389 (LTCYLCKQKG…RKTAYCDVHT (65 aa)). An N6-acetyllysine mark is found at K368, K516, and K519. Residues K554 and K594 each participate in a glycyl lysine isopeptide (Lys-Gly) (interchain with G-Cter in SUMO2) cross-link. The region spanning 562–666 (LRLTPLTVLL…DQGGVVLRQA (105 aa)) is the Bromo domain. 2 disordered regions span residues 755–776 (LSQQHSQPLPTGPGLEGFEEDG) and 791–868 (LETL…DSSF). S803 is modified (phosphoserine). The span at 852-867 (SESSISSSNSPLCDSS) shows a compositional bias: low complexity. K903 is subject to N6-acetyllysine. Residue R906 is modified to Phosphoserine. Residues 929–1012 (PLKVVWAKCS…KSKMVPLGID (84 aa)) form the PWWP domain. Phosphoserine occurs at positions 1052 and 1055.

As to quaternary structure, component of some HBO1 complex composed of KAT7/HBO1, MEAF6, ING4 and BRD1/BRPF2. Component of the MOZ/MORF complex composed at least of ING5, KAT6A, KAT6B, MEAF6 and one of BRPF1, BRD1/BRPF2 and BRPF3. Interacts (via PHD-type zinc finger domain) with unmodified histone H3. Interacts (via PWWP domain) with dimethylated and trimethylated 'Lys-79' on histone H3. In terms of tissue distribution, highly expressed in testis.

The protein localises to the nucleus. Its subcellular location is the chromosome. Functionally, scaffold subunit of various histone acetyltransferase (HAT) complexes, such as the MOZ/MORF and HBO1 complexes, that acts as a regulator of hematopoiesis. Plays a key role in HBO1 complex by directing KAT7/HBO1 specificity towards histone H3 'Lys-14' acetylation (H3K14ac), thereby promoting erythroid differentiation. In Homo sapiens (Human), this protein is Bromodomain-containing protein 1.